The chain runs to 212 residues: uncharacterized protein (212 aa).

S-adenosyl-L-methionine-binding residues include Gly-53 and Glu-74.

It belongs to the methyltransferase superfamily. YrrT family.

Functionally, could be a S-adenosyl-L-methionine-dependent methyltransferase. This is an uncharacterized protein from Exiguobacterium sibiricum (strain DSM 17290 / CCUG 55495 / CIP 109462 / JCM 13490 / 255-15).